We begin with the raw amino-acid sequence, 465 residues long: Probable Xaa-Pro aminopeptidase pepP (465 aa).

Mn(2+) contacts are provided by aspartate 263, aspartate 274, glutamate 397, and glutamate 437.

It belongs to the peptidase M24B family. It depends on Mn(2+) as a cofactor.

The enzyme catalyses Release of any N-terminal amino acid, including proline, that is linked to proline, even from a dipeptide or tripeptide.. Functionally, catalyzes the removal of a penultimate prolyl residue from the N-termini of peptides. The polypeptide is Probable Xaa-Pro aminopeptidase pepP (pepP) (Penicillium rubens (strain ATCC 28089 / DSM 1075 / NRRL 1951 / Wisconsin 54-1255) (Penicillium chrysogenum)).